Reading from the N-terminus, the 357-residue chain is Cobalt-precorrin-5B C(1)-methyltransferase (357 aa).

Belongs to the CbiD family.

The enzyme catalyses Co-precorrin-5B + S-adenosyl-L-methionine = Co-precorrin-6A + S-adenosyl-L-homocysteine. Its pathway is cofactor biosynthesis; adenosylcobalamin biosynthesis; cob(II)yrinate a,c-diamide from sirohydrochlorin (anaerobic route): step 6/10. Catalyzes the methylation of C-1 in cobalt-precorrin-5B to form cobalt-precorrin-6A. In Paramagnetospirillum magneticum (strain ATCC 700264 / AMB-1) (Magnetospirillum magneticum), this protein is Cobalt-precorrin-5B C(1)-methyltransferase.